The sequence spans 333 residues: Cap-specific mRNA (nucleoside-2'-O-)-methyltransferase (333 aa).

Residue Tyr22 participates in mRNA binding. 8 residues coordinate S-adenosyl-L-methionine: Gln39, Tyr66, Gly68, Gly72, Asp95, Arg97, Val116, and Asp138. The interval 169–249 (PVASSLKWRC…NKIVRNKVVV (81 aa)) is binding to NPH-I. Positions 169 to 333 (PVASSLKWRC…NSKRSVRGNK (165 aa)) are binding to Rap94. Residue Lys175 is the For methyltransferase activity of the active site. MRNA-binding positions include 177–180 (RCPF), Asp182, 205–207 (SAE), and Glu233.

The protein belongs to the class I-like SAM-binding methyltransferase superfamily. Poxvirus/kinetoplastid 2'-O-MTase family. In terms of assembly, interacts with poly(A) polymerase catalytic subunit OPG063. Interacts with OPG109 and OPG123; these interactions might help linking transcription to capping and polyadenylation.

Its subcellular location is the virion. It carries out the reaction a 5'-end (N(7)-methyl 5'-triphosphoguanosine)-ribonucleoside in mRNA + S-adenosyl-L-methionine = a 5'-end (N(7)-methyl 5'-triphosphoguanosine)-(2'-O-methyl-ribonucleoside) in mRNA + S-adenosyl-L-homocysteine + H(+). Functionally, displays methyltransferase, positive regulation of the poly(A) polymerase and transcription elongation activities. Involved in the modification of both mRNA ends and in intermediate and late gene positive transcription elongation. At the mRNAs 5' end, methylates the ribose 2' OH group of the first transcribed nucleotide, thereby producing a 2'-O-methylpurine cap. At the 3' end, functions as a processivity factor which stimulates the activity of the viral poly(A) polymerase OPG063 that creates mRNA's poly(A) tail. In the presence of OPG102, OPG063 does not dissociate from the RNA allowing tail elongation to around 250 adenylates. The sequence is that of Cap-specific mRNA (nucleoside-2'-O-)-methyltransferase (OPG102) from Homo sapiens (Human).